Here is a 179-residue protein sequence, read N- to C-terminus: Methylated-DNA--protein-cysteine methyltransferase, inducible (179 aa).

Cys-141 functions as the Nucleophile; methyl group acceptor in the catalytic mechanism.

The protein belongs to the MGMT family.

It carries out the reaction a 6-O-methyl-2'-deoxyguanosine in DNA + L-cysteinyl-[protein] = S-methyl-L-cysteinyl-[protein] + a 2'-deoxyguanosine in DNA. The catalysed reaction is a 4-O-methyl-thymidine in DNA + L-cysteinyl-[protein] = a thymidine in DNA + S-methyl-L-cysteinyl-[protein]. Its function is as follows. Involved in the cellular defense against the biological effects of O6-methylguanine (O6-MeG) and O4-methylthymine (O4-MeT) in DNA. Repairs the methylated nucleobase in DNA by stoichiometrically transferring the methyl group to a cysteine residue in the enzyme. This is a suicide reaction: the enzyme is irreversibly inactivated. The sequence is that of Methylated-DNA--protein-cysteine methyltransferase, inducible (adaB) from Bacillus subtilis (strain 168).